A 298-amino-acid chain; its full sequence is 2-dehydro-3-deoxy-D-arabinonate dehydratase (298 aa).

Residue Ile-86 participates in substrate binding. Residues Glu-148, Glu-150, and Asp-169 each contribute to the Mg(2+) site. Positions 187 and 261 each coordinate substrate.

The protein belongs to the FAH family. In terms of assembly, homotetramer. It depends on Mg(2+) as a cofactor. The cofactor is Ca(2+).

It carries out the reaction 2-dehydro-3-deoxy-D-arabinonate = 2,5-dioxopentanoate + H2O. Its function is as follows. Participates in a pentose oxidation pathway that converts D-arabinonate to 2-oxoglutarate. The polypeptide is 2-dehydro-3-deoxy-D-arabinonate dehydratase (Saccharolobus solfataricus (strain ATCC 35092 / DSM 1617 / JCM 11322 / P2) (Sulfolobus solfataricus)).